A 69-amino-acid polypeptide reads, in one-letter code: Beta-defensin 11 (69 aa).

An N-terminal signal peptide occupies residues 1 to 23 (MRTLCSLLLIGCLLFSYDTPVVG). 3 disulfides stabilise this stretch: C35/C64, C42/C57, and C47/C65.

Belongs to the beta-defensin family.

The protein resides in the secreted. Functionally, has antibacterial activity. The sequence is that of Beta-defensin 11 (Defb11) from Rattus norvegicus (Rat).